Consider the following 86-residue polypeptide: Candiduxin-2 (86 aa).

Positions 1-21 (MKTLLLTLVVLTIACLDLGYT) are cleaved as a signal peptide. Disulfide bonds link C24–C45, C38–C62, C66–C78, and C79–C84.

It belongs to the three-finger toxin family. Short-chain subfamily. Orphan group IX sub-subfamily. As to expression, expressed by the venom gland.

It localises to the secreted. This is Candiduxin-2 from Bungarus candidus (Malayan krait).